A 237-amino-acid polypeptide reads, in one-letter code: Small ribosomal subunit protein uS2c (237 aa).

Belongs to the universal ribosomal protein uS2 family.

It is found in the plastid. This Epifagus virginiana (Beechdrops) protein is Small ribosomal subunit protein uS2c (rps2).